The sequence spans 318 residues: Ribosomal RNA small subunit methyltransferase H (318 aa).

Residues 37–39 (GGH), aspartate 56, tyrosine 83, aspartate 104, and glutamine 111 each bind S-adenosyl-L-methionine. Positions 293-318 (EEEIAENRRAAPARLRGAQRIREDAE) are disordered.

The protein belongs to the methyltransferase superfamily. RsmH family.

Its subcellular location is the cytoplasm. It catalyses the reaction cytidine(1402) in 16S rRNA + S-adenosyl-L-methionine = N(4)-methylcytidine(1402) in 16S rRNA + S-adenosyl-L-homocysteine + H(+). Specifically methylates the N4 position of cytidine in position 1402 (C1402) of 16S rRNA. The polypeptide is Ribosomal RNA small subunit methyltransferase H (Streptomyces avermitilis (strain ATCC 31267 / DSM 46492 / JCM 5070 / NBRC 14893 / NCIMB 12804 / NRRL 8165 / MA-4680)).